We begin with the raw amino-acid sequence, 797 residues long: Probable exo-1,4-beta-xylosidase bxlB (797 aa).

The signal sequence occupies residues 1 to 21 (MPLICIVYFLQYLDKIAISYA). 2 N-linked (GlcNAc...) asparagine glycosylation sites follow: Asn-86 and Asn-126. The active site involves Asp-312. Asn-364, Asn-431, Asn-442, Asn-483, Asn-644, and Asn-787 each carry an N-linked (GlcNAc...) asparagine glycan.

It belongs to the glycosyl hydrolase 3 family.

Its subcellular location is the secreted. The catalysed reaction is Hydrolysis of (1-&gt;4)-beta-D-xylans, to remove successive D-xylose residues from the non-reducing termini.. Its pathway is glycan degradation; xylan degradation. Functionally, xylan 1,4-beta-xylosidase involved in the hydrolysis of xylan, a major structural heterogeneous polysaccharide found in plant biomass representing the second most abundant polysaccharide in the biosphere, after cellulose. The chain is Probable exo-1,4-beta-xylosidase bxlB (bxlB) from Aspergillus oryzae (strain ATCC 42149 / RIB 40) (Yellow koji mold).